The primary structure comprises 330 residues: MAAGSVESQRSQAASERPVAGQAGVLPCLELPSYAAACALVGSRYSCLVAAPHRRHIALSPRYLSRKRTGIREQLDAELLRYSESLLGVPIAYDNIRVVGELGDIYDDQGHIHLNIEADFVIFCPEPGQTLMGTVNKVSSSHIGCLVHGCFNASIPKPEQMSYEEWQTLEIHVGDELEFDVFRLDSDSAGVFCIRGKLSTTSLQLKHSAVSEDVAETVVEEVVEKTPKKKKKKKDKDTDTCGTVDSVTEVADVTDVTPQEETDIPCSDNVNDFFEEEPKKKKKKKKRHQEDQDPIFQASDSSGYQSDHNKKKKKRKHSEEANFESPKKRQ.

The disordered stretch occupies residues 251–330; it reads ADVTDVTPQE…ANFESPKKRQ (80 aa). Serine 306, serine 318, and serine 325 each carry phosphoserine. A compositionally biased stretch (basic and acidic residues) spans 317 to 330; sequence HSEEANFESPKKRQ.

This sequence belongs to the eukaryotic RPA43 RNA polymerase subunit family. As to quaternary structure, component of the RNA polymerase I (Pol I) complex consisting of 13 subunits: a ten-subunit catalytic core composed of POLR1A/RPA1, POLR1B/RPA2, POLR1C/RPAC1, POLR1D/RPAC2, POLR1H/RPA12, POLR2E/RPABC1, POLR2F/RPABC2, POLR2H/RPABC3, POLR2K/RPABC4 and POLR2L/RPABC5; a mobile stalk subunit POLR1F/RPA43 protruding from the core and additional subunits homologous to general transcription factors POLR1E/RPA49 and POLR1G/RPA34. Interacts with RRN3/TIF-IA. Interacts with RRN3/TIF-IA. In terms of tissue distribution, widely expressed.

Its subcellular location is the nucleus. It is found in the nucleolus. Functionally, component of RNA polymerase I (Pol I), a DNA-dependent RNA polymerase which synthesizes ribosomal RNA precursors using the four ribonucleoside triphosphates as substrates. Through its association with RRN3/TIF-IA may be involved in recruitment of Pol I to rDNA promoters. The polypeptide is DNA-directed RNA polymerase I subunit RPA43 (Mus musculus (Mouse)).